Consider the following 437-residue polypeptide: Enolase (437 aa).

(2R)-2-phosphoglycerate is bound at residue Gln-163. Glu-205 (proton donor) is an active-site residue. Mg(2+)-binding residues include Asp-242, Glu-285, and Asp-312. Residues Lys-337, Arg-366, Ser-367, and Lys-388 each contribute to the (2R)-2-phosphoglycerate site. Lys-337 acts as the Proton acceptor in catalysis.

It belongs to the enolase family. It depends on Mg(2+) as a cofactor.

It localises to the cytoplasm. The protein resides in the secreted. It is found in the cell surface. It catalyses the reaction (2R)-2-phosphoglycerate = phosphoenolpyruvate + H2O. The protein operates within carbohydrate degradation; glycolysis; pyruvate from D-glyceraldehyde 3-phosphate: step 4/5. Catalyzes the reversible conversion of 2-phosphoglycerate (2-PG) into phosphoenolpyruvate (PEP). It is essential for the degradation of carbohydrates via glycolysis. This Nitratidesulfovibrio vulgaris (strain DP4) (Desulfovibrio vulgaris) protein is Enolase.